The following is a 72-amino-acid chain: Conorfamide-Tx2 (72 aa).

The signal sequence occupies residues 1–19 (MSGRGFLLLALLLLVTVEA). The propeptide occupies 20–25 (TRVEKK). The segment at 32–39 (AWSGPRNR) is positively charged region crucial for activity against MRGPRX1 receptors. At isoleucine 43 the chain carries Isoleucine amide. Positions 44-72 (GRRDMQSPLLSERLRFRALGFRQPSSQKQ) are excised as a propeptide.

It belongs to the FARP (FMRFamide related peptide) family. Expressed by the venom duct.

The protein resides in the secreted. Functionally, this peptide activates human sensory neuron-specific G-protein coupled receptors MRGPRX1, but not mouse receptors (EC(50)=0.54 uM). Compared with the agonist chloroquine (anti-malaria drug), it is 600-fold more potent. In vivo, induces itch sensation, since intradermal cheek injection into humanized transgenic mouse (mouse MRGPRX1 replaced by human MRGPRX1) induces scratching. In vivo, treatment of zebrafish larvae with high doses (10 uM) induces hypoactivity at the beginning of the experiment during the dark phase and hyperactivity in the strobe phase after one hour, even after the removal of the toxin from the solution. This chain is Conorfamide-Tx2, found in Conus textile (Cloth-of-gold cone).